The sequence spans 122 residues: Glucagon-2 (122 aa).

A signal peptide spans 1–21; sequence MTSLHSLAGLLLLMIIQSSWQ. 2 consecutive propeptides follow at residues 83–86 and Glu-122; that span reads NGLF.

Belongs to the glucagon family.

It is found in the secreted. Its function is as follows. Promotes hydrolysis of glycogen and lipids, and raises the blood sugar level. This Lophius americanus (American angler) protein is Glucagon-2 (gcg2).